A 305-amino-acid chain; its full sequence is UDP-3-O-acyl-N-acetylglucosamine deacetylase (305 aa).

Positions 79, 238, and 242 each coordinate Zn(2+). His-265 functions as the Proton donor in the catalytic mechanism.

It belongs to the LpxC family. Zn(2+) serves as cofactor.

It catalyses the reaction a UDP-3-O-[(3R)-3-hydroxyacyl]-N-acetyl-alpha-D-glucosamine + H2O = a UDP-3-O-[(3R)-3-hydroxyacyl]-alpha-D-glucosamine + acetate. It participates in glycolipid biosynthesis; lipid IV(A) biosynthesis; lipid IV(A) from (3R)-3-hydroxytetradecanoyl-[acyl-carrier-protein] and UDP-N-acetyl-alpha-D-glucosamine: step 2/6. Catalyzes the hydrolysis of UDP-3-O-myristoyl-N-acetylglucosamine to form UDP-3-O-myristoylglucosamine and acetate, the committed step in lipid A biosynthesis. The polypeptide is UDP-3-O-acyl-N-acetylglucosamine deacetylase (Aliivibrio fischeri (strain ATCC 700601 / ES114) (Vibrio fischeri)).